The following is a 372-amino-acid chain: Envelope phospholipase OPG057 (372 aa).

Residues 153–156 (YPPL) carry the YPPL motif. Residues Cys185 and Cys186 are each lipidated (S-palmitoyl cysteine; by host). Positions 307-334 (FTIQNNTKLLIVDDEYVHITSANFDGTH) constitute a PLD phosphodiesterase domain.

The protein belongs to the orthopoxvirus OPG057 family. In terms of assembly, interacts with protein OPG190. Post-translationally, palmitoylated. Attachment of the palmitate moiety is essential for correct intracellular targeting and protein function.

It localises to the virion membrane. The protein localises to the host Golgi apparatus. The protein resides in the host trans-Golgi network. Its subcellular location is the host endoplasmic reticulum membrane. It catalyses the reaction a 1,2-diacyl-sn-glycero-3-phosphocholine + H2O = a 1,2-diacyl-sn-glycero-3-phosphate + choline + H(+). Functionally, major envelope protein that plays a role in the biogenesis of the viral double membrane and in egress of virus from the host cell. Produces the wrapped form of virus that is required for cell-to-cell spread. Acts as a lipase with broad specificity including phospholipase C, phospholipase A, and triacylglycerol lipase activities. The protein is Envelope phospholipase OPG057 (OPG057) of Cynomys gunnisoni (Gunnison's prairie dog).